Reading from the N-terminus, the 370-residue chain is 3-isopropylmalate dehydrogenase (370 aa).

77 to 90 (GPKWDGVPYEHRPE) serves as a coordination point for NAD(+). Arg-97, Arg-107, Arg-135, and Asp-226 together coordinate substrate. Positions 226, 250, and 254 each coordinate Mg(2+). 290-302 (GSAPDIAGKSIAN) is an NAD(+) binding site.

This sequence belongs to the isocitrate and isopropylmalate dehydrogenases family. LeuB type 1 subfamily. As to quaternary structure, homodimer. The cofactor is Mg(2+). Mn(2+) is required as a cofactor.

The protein resides in the cytoplasm. The catalysed reaction is (2R,3S)-3-isopropylmalate + NAD(+) = 4-methyl-2-oxopentanoate + CO2 + NADH. The protein operates within amino-acid biosynthesis; L-leucine biosynthesis; L-leucine from 3-methyl-2-oxobutanoate: step 3/4. In terms of biological role, catalyzes the oxidation of 3-carboxy-2-hydroxy-4-methylpentanoate (3-isopropylmalate) to 3-carboxy-4-methyl-2-oxopentanoate. The product decarboxylates to 4-methyl-2 oxopentanoate. In Agrobacterium fabrum (strain C58 / ATCC 33970) (Agrobacterium tumefaciens (strain C58)), this protein is 3-isopropylmalate dehydrogenase (leuB).